Reading from the N-terminus, the 194-residue chain is ATP-dependent Clp protease proteolytic subunit (194 aa).

S97 acts as the Nucleophile in catalysis. Residue H122 is part of the active site.

The protein belongs to the peptidase S14 family. Fourteen ClpP subunits assemble into 2 heptameric rings which stack back to back to give a disk-like structure with a central cavity, resembling the structure of eukaryotic proteasomes.

It localises to the cytoplasm. It catalyses the reaction Hydrolysis of proteins to small peptides in the presence of ATP and magnesium. alpha-casein is the usual test substrate. In the absence of ATP, only oligopeptides shorter than five residues are hydrolyzed (such as succinyl-Leu-Tyr-|-NHMec, and Leu-Tyr-Leu-|-Tyr-Trp, in which cleavage of the -Tyr-|-Leu- and -Tyr-|-Trp bonds also occurs).. Its function is as follows. Cleaves peptides in various proteins in a process that requires ATP hydrolysis. Has a chymotrypsin-like activity. Plays a major role in the degradation of misfolded proteins. The protein is ATP-dependent Clp protease proteolytic subunit of Carsonella ruddii (strain PV).